The primary structure comprises 312 residues: Aquaporin-6 (312 aa).

The Cytoplasmic portion of the chain corresponds to 1 to 50; sequence MDDKFDDDALPNSKTTAKDYEDKLPEYDYTTTFPNTWMRLREPFREYFAE. Residues 51 to 71 traverse the membrane as a helical segment; it reads FVGVAVLIIFGVGADCQVVLS. The Extracellular portion of the chain corresponds to 72–89; sequence ANTGVASSPKGSYLSLNC. The chain crosses the membrane as a helical span at residues 90–110; that stretch reads GWAIGTAMGVWISGGISGGHI. Positions 111-113 match the NPA 1 motif; sequence NPA. Residues 111–128 lie on the Cytoplasmic side of the membrane; it reads NPAVTLAMATWRGFPWWK. The chain crosses the membrane as a helical span at residues 129–149; that stretch reads VPGFIFAQLLGGIVGAGLVYV. Over 150–183 the chain is Extracellular; that stretch reads NYIHAIDIVEGGRHIRTLDTAGLFATYAADYMTN. N-linked (GlcNAc...) asparagine glycosylation occurs at Asn183. A helical transmembrane segment spans residues 184–204; that stretch reads LSCFFSEFLATAVLIIVIHAM. The Cytoplasmic portion of the chain corresponds to 205–213; that stretch reads NDKRNTPPP. A helical transmembrane segment spans residues 214 to 234; the sequence is AGIVPFVLFFLILGIGASLGM. Residues 235–267 lie on the Extracellular side of the membrane; that stretch reads ETGYAINPARDLGPRMLTAMVGYGRQVFAFRNQ. The NPA 2 motif lies at 241–243; that stretch reads NPA. The chain crosses the membrane as a helical span at residues 268-288; it reads YWIWCPVLAPFLGAQVGTIFY. Topologically, residues 289 to 312 are cytoplasmic; that stretch reads DLFFYKGQDNVFGRLGSHIHISPA.

The protein belongs to the MIP/aquaporin (TC 1.A.8) family.

It is found in the membrane. It catalyses the reaction H2O(in) = H2O(out). Water channel required to facilitate the transport of water across membranes. Does not mediate the transport carbon dioxide nor nitric oxide across the membrane. Plays a key role in root water transport of mycorrhizal plant such ectomycorrhizal white spruce or trembling aspen via the hydration at the hyphal-root interphase. Contributes in fungal cellular processes during the basidiocarp formation. This Laccaria bicolor (Bicoloured deceiver) protein is Aquaporin-6.